A 220-amino-acid chain; its full sequence is Fructose-6-phosphate aldolase (220 aa).

The Schiff-base intermediate with substrate role is filled by Lys85.

This sequence belongs to the transaldolase family. Type 3A subfamily. As to quaternary structure, homodecamer.

Its subcellular location is the cytoplasm. The enzyme catalyses beta-D-fructose 6-phosphate = dihydroxyacetone + D-glyceraldehyde 3-phosphate. Its function is as follows. Catalyzes the reversible formation of fructose 6-phosphate from dihydroxyacetone and D-glyceraldehyde 3-phosphate via an aldolization reaction. This Salmonella heidelberg (strain SL476) protein is Fructose-6-phosphate aldolase.